The primary structure comprises 49 residues: Defensin-like protein 1 (49 aa).

4 disulfides stabilise this stretch: cysteine 3-cysteine 49, cysteine 14-cysteine 35, cysteine 20-cysteine 43, and cysteine 24-cysteine 45.

Belongs to the DEFL family.

It localises to the secreted. Its function is as follows. Possesses antimicrobial activity sensitive to inorganic cations. Binds specifically to the fungal plasma membrane. Has no inhibitory effect on insect gut alpha-amylase. The protein is Defensin-like protein 1 of Clitoria ternatea (Butterfly pea).